Consider the following 525-residue polypeptide: GMP synthase [glutamine-hydrolyzing] (525 aa).

In terms of domain architecture, Glutamine amidotransferase type-1 spans 9–207; it reads RILILDFGSQ…VRDICQCEAL (199 aa). Cys-86 serves as the catalytic Nucleophile. Active-site residues include His-181 and Glu-183. The GMPS ATP-PPase domain occupies 208–400; sequence WTPAKIIDDA…LGLPYDMLYR (193 aa). 235 to 241 lines the ATP pocket; sequence SGGVDSS.

Homodimer.

It carries out the reaction XMP + L-glutamine + ATP + H2O = GMP + L-glutamate + AMP + diphosphate + 2 H(+). Its pathway is purine metabolism; GMP biosynthesis; GMP from XMP (L-Gln route): step 1/1. Its function is as follows. Catalyzes the synthesis of GMP from XMP. The polypeptide is GMP synthase [glutamine-hydrolyzing] (Shigella flexneri).